The following is a 159-amino-acid chain: 6,7-dimethyl-8-ribityllumazine synthase (159 aa).

5-amino-6-(D-ribitylamino)uracil-binding positions include F22, 56-58, and 80-82; these read AFE and AVI. 85-86 contributes to the (2S)-2-hydroxy-3-oxobutyl phosphate binding site; sequence AT. Catalysis depends on H88, which acts as the Proton donor. F113 lines the 5-amino-6-(D-ribitylamino)uracil pocket. Position 127 (R127) interacts with (2S)-2-hydroxy-3-oxobutyl phosphate.

Belongs to the DMRL synthase family.

The catalysed reaction is (2S)-2-hydroxy-3-oxobutyl phosphate + 5-amino-6-(D-ribitylamino)uracil = 6,7-dimethyl-8-(1-D-ribityl)lumazine + phosphate + 2 H2O + H(+). It functions in the pathway cofactor biosynthesis; riboflavin biosynthesis; riboflavin from 2-hydroxy-3-oxobutyl phosphate and 5-amino-6-(D-ribitylamino)uracil: step 1/2. Catalyzes the formation of 6,7-dimethyl-8-ribityllumazine by condensation of 5-amino-6-(D-ribitylamino)uracil with 3,4-dihydroxy-2-butanone 4-phosphate. This is the penultimate step in the biosynthesis of riboflavin. This Lactiplantibacillus plantarum (strain ATCC BAA-793 / NCIMB 8826 / WCFS1) (Lactobacillus plantarum) protein is 6,7-dimethyl-8-ribityllumazine synthase.